Reading from the N-terminus, the 445-residue chain is Tubulin beta-4B chain (445 aa).

The MREI motif motif lies at 1 to 4 (MREI). Position 11 (Gln11) interacts with GTP. Position 55 is a phosphothreonine (Thr55). Position 58 is an N6-acetyllysine (Lys58). Glu69, Ser138, Gly142, Thr143, and Gly144 together coordinate GTP. Glu69 is a binding site for Mg(2+). Residue Ser172 is modified to Phosphoserine; by CDK1. Residues Asn204 and Asn226 each coordinate GTP. A disordered region spans residues 426 to 445 (QDATAEEEGEFEEEAEEEVA). Over residues 429–445 (TAEEEGEFEEEAEEEVA) the composition is skewed to acidic residues. Glu438 carries the post-translational modification 5-glutamyl polyglutamate.

The protein belongs to the tubulin family. As to quaternary structure, dimer of alpha and beta chains. A typical microtubule is a hollow water-filled tube with an outer diameter of 25 nm and an inner diameter of 15 nM. Alpha-beta heterodimers associate head-to-tail to form protofilaments running lengthwise along the microtubule wall with the beta-tubulin subunit facing the microtubule plus end conferring a structural polarity. Microtubules usually have 13 protofilaments but different protofilament numbers can be found in some organisms and specialized cells. Component of sperm flagellar doublet microtubules. Mg(2+) is required as a cofactor. Post-translationally, some glutamate residues at the C-terminus are polyglycylated, resulting in polyglycine chains on the gamma-carboxyl group. Glycylation is mainly limited to tubulin incorporated into axonemes (cilia and flagella) whereas glutamylation is prevalent in neuronal cells, centrioles, axonemes, and the mitotic spindle. Both modifications can coexist on the same protein on adjacent residues, and lowering polyglycylation levels increases polyglutamylation, and reciprocally. Cilia and flagella glycylation is required for their stability and maintenance. Flagella glycylation controls sperm motility. Some glutamate residues at the C-terminus are polyglutamylated, resulting in polyglutamate chains on the gamma-carboxyl group. Polyglutamylation plays a key role in microtubule severing by spastin (SPAST). SPAST preferentially recognizes and acts on microtubules decorated with short polyglutamate tails: severing activity by SPAST increases as the number of glutamates per tubulin rises from one to eight, but decreases beyond this glutamylation threshold. Glutamylation is also involved in cilia motility. In terms of processing, phosphorylated on Ser-172 by CDK1 during the cell cycle, from metaphase to telophase, but not in interphase. This phosphorylation inhibits tubulin incorporation into microtubules.

Its subcellular location is the cytoplasm. The protein localises to the cytoskeleton. The protein resides in the flagellum axoneme. Functionally, tubulin is the major constituent of microtubules, a cylinder consisting of laterally associated linear protofilaments composed of alpha- and beta-tubulin heterodimers. Microtubules grow by the addition of GTP-tubulin dimers to the microtubule end, where a stabilizing cap forms. Below the cap, tubulin dimers are in GDP-bound state, owing to GTPase activity of alpha-tubulin. This Rattus norvegicus (Rat) protein is Tubulin beta-4B chain (Tubb4b).